Reading from the N-terminus, the 529-residue chain is 2-(3-amino-3-carboxypropyl)histidine synthase subunit 2-2 (529 aa).

Positions 130, 151, and 366 each coordinate [4Fe-4S] cluster.

Belongs to the DPH1/DPH2 family. DPH2 subfamily. As to quaternary structure, component of the 2-(3-amino-3-carboxypropyl)histidine synthase complex composed of DPH1, DPH2, DPH3 and a NADH-dependent reductase, predominantly CBR1. Requires [4Fe-4S] cluster as cofactor.

It is found in the cytoplasm. The protein operates within protein modification; peptidyl-diphthamide biosynthesis. In terms of biological role, required for the first step of diphthamide biosynthesis, a post-translational modification of histidine which occurs in elongation factor 2. DPH1 and DPH2 transfer a 3-amino-3-carboxypropyl (ACP) group from S-adenosyl-L-methionine (SAM) to a histidine residue, the reaction is assisted by a reduction system comprising DPH3 and a NADH-dependent reductase, predominantly CBR1. Facilitates the reduction of the catalytic iron-sulfur cluster found in the DPH1 subunit. The polypeptide is 2-(3-amino-3-carboxypropyl)histidine synthase subunit 2-2 (Candida albicans (strain SC5314 / ATCC MYA-2876) (Yeast)).